The primary structure comprises 77 residues: Acyl carrier protein (77 aa).

The Carrier domain maps to 2–77 (ADVLERVTKI…DAVNYIKSRL (76 aa)). O-(pantetheine 4'-phosphoryl)serine is present on Ser37.

The protein belongs to the acyl carrier protein (ACP) family. Post-translationally, 4'-phosphopantetheine is transferred from CoA to a specific serine of apo-ACP by AcpS. This modification is essential for activity because fatty acids are bound in thioester linkage to the sulfhydryl of the prosthetic group.

The protein localises to the cytoplasm. Its pathway is lipid metabolism; fatty acid biosynthesis. Its function is as follows. Carrier of the growing fatty acid chain in fatty acid biosynthesis. The sequence is that of Acyl carrier protein from Geobacillus kaustophilus (strain HTA426).